The following is a 529-amino-acid chain: Beta-hexosaminidase subunit alpha (529 aa).

The signal sequence occupies residues 1–22; sequence MTSSRLWFSLLLAAAFAGRATA. A propeptide spanning residues 23–88 is cleaved from the precursor; that stretch reads LWPWPQNFQT…PRPYLTGKRH (66 aa). A disulfide bridge links cysteine 58 with cysteine 104. Residues asparagine 115, asparagine 157, and asparagine 295 are each glycosylated (N-linked (GlcNAc...) asparagine). Cysteine 277 and cysteine 328 are joined by a disulfide. Glutamate 323 serves as the catalytic Proton donor. A critical for hydrolysis GM2 gangliosides region spans residues 423–424; the sequence is NR. An intrachain disulfide couples cysteine 505 to cysteine 522.

The protein belongs to the glycosyl hydrolase 20 family. In terms of assembly, there are 3 beta-hexosaminidase isozymes: isozyme A (hexosaminidase A) is a heterodimer composed of one subunit alpha and one subunit beta (chain A and B); isozyme B (hexosaminidase B) is a homodimer of two beta subunits (two chains A and B); isozyme S (hexosaminidase S) is a homodimer of two alpha subunits. The composition of the dimer (isozyme A versus isozyme S) has a significant effect on the substrate specificity of the alpha subunit active site. N-linked glycan at Asn-115 consists of Man(3)-GlcNAc(2). N-linked glycan at Asn-157 consists of either GlcNAc or GlcNAc(2)-Man(7-9). N-linked glycan at Asn-295 consists of either GlcNAc, GlcNAc-Fuc, or GlcNAc(2)-Man(4).

It localises to the lysosome. It carries out the reaction Hydrolysis of terminal non-reducing N-acetyl-D-hexosamine residues in N-acetyl-beta-D-hexosaminides.. The catalysed reaction is N-acetyl-beta-D-galactosaminyl-(1-&gt;4)-beta-D-3-sulfogalactosyl-(1-&gt;4)-beta-D-glucosyl-(1&lt;-&gt;1')-ceramide + H2O = a beta-D-3-sulfogalactosyl-(1-&gt;4)-beta-D-glucosyl-(1&lt;-&gt;1')-ceramide + N-acetyl-beta-D-galactosamine. It catalyses the reaction a ganglioside GM2 (d18:1(4E)) + H2O = a ganglioside GM3 (d18:1(4E)) + N-acetyl-beta-D-galactosamine. The enzyme catalyses a ganglioside GM2 + H2O = a ganglioside GM3 + N-acetyl-beta-D-galactosamine. It carries out the reaction beta-D-GalNAc-(1-&gt;4)-alpha-L-IdoA-(1-&gt;3)-beta-D-GalNAc-4-sulfate-(1-&gt;4)-alpha-L-IdoA-(1-&gt;3)-D-GalNAc-4-sulfate + H2O = alpha-L-IdoA-(1-&gt;3)-beta-D-GalNAc-4-sulfate-(1-&gt;4)-alpha-L-IdoA-(1-&gt;3)-D-GalNAc-4-sulfate + N-acetyl-D-galactosamine. The catalysed reaction is N-acetyl-beta-D-6-sulfogalactosaminyl-(1-&gt;4)-alpha-L-iduronyl-(1-&gt;3)-N-acetyl-D-6-sulfogalactosamine + H2O = alpha-L-iduronyl-(1-&gt;3)-N-acetyl-D-6-sulfogalactosamine + N-acetyl-D-6-sulfogalactosamine. Addition of GM2A stimulates the hydrolysis of sulfated glycosphingolipid SM2 and the ganglioside GM2. Its function is as follows. Hydrolyzes the non-reducing end N-acetyl-D-hexosamine and/or sulfated N-acetyl-D-hexosamine of glycoconjugates, such as the oligosaccharide moieties from proteins and neutral glycolipids, or from certain mucopolysaccharides. The isozyme S is as active as the isozyme A on the anionic bis-sulfated glycans, the chondroitin-6-sulfate trisaccharide (C6S-3), and the dermatan sulfate pentasaccharide, and the sulfated glycosphingolipid SM2. The isozyme B does not hydrolyze each of these substrates, however hydrolyzes efficiently neutral oligosaccharide. Only the isozyme A is responsible for the degradation of GM2 gangliosides in the presence of GM2A. This Homo sapiens (Human) protein is Beta-hexosaminidase subunit alpha.